A 211-amino-acid polypeptide reads, in one-letter code: Ribosomal RNA small subunit methyltransferase G (211 aa).

S-adenosyl-L-methionine-binding positions include G73, F78, 124–125, and R137; that span reads VE.

It belongs to the methyltransferase superfamily. RNA methyltransferase RsmG family.

The protein localises to the cytoplasm. Its function is as follows. Specifically methylates the N7 position of a guanine in 16S rRNA. The protein is Ribosomal RNA small subunit methyltransferase G of Christiangramia forsetii (strain DSM 17595 / CGMCC 1.15422 / KT0803) (Gramella forsetii).